Here is a 282-residue protein sequence, read N- to C-terminus: uncharacterized protein (282 aa).

Residues 205–277 (LAQQRRVYAQ…DELQNKARDA (73 aa)) adopt a coiled-coil conformation.

This is an uncharacterized protein from Treponema pallidum (strain Nichols).